The primary structure comprises 205 residues: Small ribosomal subunit protein uS4c (205 aa).

The S4 RNA-binding domain maps to 93 to 156 (MRLDNTVFRL…KSRNLVLNNL (64 aa)).

This sequence belongs to the universal ribosomal protein uS4 family. Part of the 30S ribosomal subunit. Contacts protein S5. The interaction surface between S4 and S5 is involved in control of translational fidelity.

It is found in the plastid. The protein resides in the chloroplast. Functionally, one of the primary rRNA binding proteins, it binds directly to 16S rRNA where it nucleates assembly of the body of the 30S subunit. With S5 and S12 plays an important role in translational accuracy. This chain is Small ribosomal subunit protein uS4c (rps4), found in Mesostigma viride (Green alga).